Consider the following 312-residue polypeptide: DNA-directed RNA polymerase subunit alpha (312 aa).

The segment at 1–226 is alpha N-terminal domain (alpha-NTD); that stretch reads MIEFEKPKIT…DHLNLFVDLS (226 aa). Positions 243–312 are alpha C-terminal domain (alpha-CTD); that stretch reads TERVLDKIIE…ELGLSLKKRK (70 aa).

Belongs to the RNA polymerase alpha chain family. As to quaternary structure, homodimer. The RNAP catalytic core consists of 2 alpha, 1 beta, 1 beta' and 1 omega subunit. When a sigma factor is associated with the core the holoenzyme is formed, which can initiate transcription.

It carries out the reaction RNA(n) + a ribonucleoside 5'-triphosphate = RNA(n+1) + diphosphate. DNA-dependent RNA polymerase catalyzes the transcription of DNA into RNA using the four ribonucleoside triphosphates as substrates. The chain is DNA-directed RNA polymerase subunit alpha from Lactococcus lactis subsp. lactis (strain IL1403) (Streptococcus lactis).